Reading from the N-terminus, the 402-residue chain is Mannonate dehydratase 1 (402 aa).

It belongs to the mannonate dehydratase family. Fe(2+) is required as a cofactor. Mn(2+) serves as cofactor.

It carries out the reaction D-mannonate = 2-dehydro-3-deoxy-D-gluconate + H2O. It participates in carbohydrate metabolism; pentose and glucuronate interconversion. Its function is as follows. Catalyzes the dehydration of D-mannonate. This chain is Mannonate dehydratase 1 (uxuA1), found in Agrobacterium fabrum (strain C58 / ATCC 33970) (Agrobacterium tumefaciens (strain C58)).